A 204-amino-acid polypeptide reads, in one-letter code: Signal peptidase I (204 aa).

Residues 1–10 (MNSFKNFLKE) are Cytoplasmic-facing. Residues 11-30 (WGLFLLILSLLALSRIFFWS) traverse the membrane as a helical segment. Residues 31-204 (NVRVEGHSMD…LWPITRIGTF (174 aa)) lie on the Extracellular side of the membrane. Active-site residues include Ser38 and Lys76.

It belongs to the peptidase S26 family.

The protein localises to the cell membrane. The enzyme catalyses Cleavage of hydrophobic, N-terminal signal or leader sequences from secreted and periplasmic proteins.. The sequence is that of Signal peptidase I (lepB) from Streptococcus pneumoniae serotype 4 (strain ATCC BAA-334 / TIGR4).